We begin with the raw amino-acid sequence, 128 residues long: uncharacterized protein (128 aa).

The segment at 1–26 (MNSATSETTTNTGAAETTTSTGAAET) is disordered. A helical transmembrane segment spans residues 105-127 (IANGLLTNNGISVFISTVLLAIV).

It belongs to the flocculin family.

It localises to the membrane. This is an uncharacterized protein from Saccharomyces cerevisiae (strain ATCC 204508 / S288c) (Baker's yeast).